The following is a 196-amino-acid chain: MEELPATAVGLKVNDGIVLASERRLSYGGYVLSKQAKKVYKINKFLMAGAGIYGDLQTLTRIMNVEIKYYEVSTGKPISVHAAAKLLSVILYQYKVMPFISEILFGGVDEKGPQLYVLDPIGSLIEDNYAAVGSGARIAIGVLESEYDPNMSLDVATQLITKAIKASIERDITSGDGIDLAIIDKKGNYENKFIPY.

The propeptide at 1–6 is removed in mature form; by autocatalysis; sequence MEELPA. Threonine 7 acts as the Nucleophile in catalysis.

It belongs to the peptidase T1B family. In terms of assembly, the 20S proteasome core is composed of 14 alpha and 14 beta subunits that assemble into four stacked heptameric rings, resulting in a barrel-shaped structure. The two inner rings, each composed of seven catalytic beta subunits, are sandwiched by two outer rings, each composed of seven alpha subunits. The catalytic chamber with the active sites is on the inside of the barrel. Has a gated structure, the ends of the cylinder being occluded by the N-termini of the alpha-subunits. Is capped at one or both ends by the proteasome regulatory ATPase, PAN.

Its subcellular location is the cytoplasm. The enzyme catalyses Cleavage of peptide bonds with very broad specificity.. With respect to regulation, the formation of the proteasomal ATPase PAN-20S proteasome complex, via the docking of the C-termini of PAN into the intersubunit pockets in the alpha-rings, triggers opening of the gate for substrate entry. Interconversion between the open-gate and close-gate conformations leads to a dynamic regulation of the 20S proteasome proteolysis activity. Component of the proteasome core, a large protease complex with broad specificity involved in protein degradation. This is Proteasome subunit beta 1 from Saccharolobus solfataricus (strain ATCC 35092 / DSM 1617 / JCM 11322 / P2) (Sulfolobus solfataricus).